The following is a 354-amino-acid chain: Guanine nucleotide-binding protein G(t) subunit alpha-2 (354 aa).

The segment at 1 to 27 (MGSGASAEDKELAKRSKELEKKLQEDA) is disordered. Gly-2 carries N-myristoyl glycine lipidation. Residues 7-27 (AEDKELAKRSKELEKKLQEDA) show a composition bias toward basic and acidic residues. Residues 32–354 (KTVKLLLLGA…KENLKDCGLF (323 aa)) form the G-alpha domain. A G1 motif region spans residues 35–48 (KLLLLGAGESGKST). Residues 40-47 (GAGESGKS), 175-181 (LRSRVKT), 200-204 (DVGGQ), 269-272 (NKKD), and Ala-326 each bind GTP. Mg(2+) contacts are provided by Ser-47 and Thr-181. The interval 173-181 (DVLRSRVKT) is G2 motif. The G3 motif stretch occupies residues 196 to 205 (FRMFDVGGQR). The tract at residues 265-272 (VLFLNKKD) is G4 motif. Residues 324 to 329 (TCATDT) are G5 motif.

It belongs to the G-alpha family. G(i/o/t/z) subfamily. In terms of assembly, g proteins are composed of 3 units; alpha, beta and gamma. The alpha chain contains the guanine nucleotide binding site. As to expression, retinal rod outer segment.

Its subcellular location is the cell projection. It localises to the cilium. It is found in the photoreceptor outer segment. The protein resides in the photoreceptor inner segment. Functionally, guanine nucleotide-binding proteins (G proteins) are involved as modulators or transducers in various transmembrane signaling systems. Transducin is an amplifier and one of the transducers of a visual impulse that performs the coupling between rhodopsin and cGMP-phosphodiesterase. The polypeptide is Guanine nucleotide-binding protein G(t) subunit alpha-2 (GNAT2) (Bos taurus (Bovine)).